Here is a 266-residue protein sequence, read N- to C-terminus: Type 1 encapsulin shell protein (266 aa).

It belongs to the encapsulin family. Family 1 subfamily. As to quaternary structure, homomultimeric. This encapsulin nanocompartment is formed by 60 subunits, and encloses one Dyp homohexamer; partially assembled 58-subunit compartments with and without cargo are also purified. May assemble the shell from dimers. Monomers form pentamers, which assemble to form hollow shells with pores 5-8 Angstroms in diameter where 3 pentamers meet.

The protein resides in the encapsulin nanocompartment. In terms of biological role, shell component of a type 1 encapsulin nanocompartment. Assembles into proteinaceous shells 23-24 nm in diameter with 2-2.5 nm thick walls. Endogenous cargo protein DyP (dye-decolorizing peroxidase) is targeted to the interior via its C-terminal extension; only 1 DyP hexamer is incorporated into each shell. Empty shells can be isolated in the absence of cargo. Cargo encapsulation probably precedes assembly of the nanocompartment; may assemble or disassemble via dimers, subcomplexes with a distinct preference for even numbers of subunits are detected. Nanocompartments are stable against mechanical forces; loaded nanocompartments are less stable than empty ones. Nanocompartments are stable between pH 5-10; they aggregate at pH 9-10 and start to disassemble at pH 11. They are stable in 1M NaCl, 1 M MgCl(2) and 1M CaCl(2), unstable in 20% DMSO (dimethylsulfoxide) and are stable in 20% but not 40% ethanol. The protein is Type 1 encapsulin shell protein of Brevibacterium linens.